The primary structure comprises 156 residues: MPRRRVAAKREIIPDPKFGSARLAKFINHVMESGKKSVAERIVYGALDIVAEKSKEEPIEMFEKALENIQPMVEVKSRRVGGATYQVPVEVRPSRQNALAMRWLVEYSRKRGEKSMAQRLAGEILDAADSKGAAVKKREDVHRMAEANKAFSHFRF.

Belongs to the universal ribosomal protein uS7 family. Part of the 30S ribosomal subunit. Contacts proteins S9 and S11.

One of the primary rRNA binding proteins, it binds directly to 16S rRNA where it nucleates assembly of the head domain of the 30S subunit. Is located at the subunit interface close to the decoding center, probably blocks exit of the E-site tRNA. The chain is Small ribosomal subunit protein uS7 from Marinobacter nauticus (strain ATCC 700491 / DSM 11845 / VT8) (Marinobacter aquaeolei).